The chain runs to 455 residues: Differentiation-associated protein 1 (455 aa).

The first 21 residues, 1–21, serve as a signal peptide directing secretion; the sequence is MKFKLFLLVFFVFLLPYLSQS. Positions 349–434 are disordered; sequence IGSSSSSSSS…SDDDLGNPSS (86 aa). Low complexity predominate over residues 351-423; that stretch reads SSSSSSSSSS…KSNHTSSESS (73 aa). Ser-433 carries GPI-like-anchor amidated serine lipidation. Positions 434-455 are cleaved as a propeptide — removed in mature form; the sequence is SSSILSVSKLIILLISIILYCF.

It localises to the cell membrane. In terms of biological role, plays a role in differentiation. The protein is Differentiation-associated protein 1 (dia1) of Dictyostelium discoideum (Social amoeba).